Reading from the N-terminus, the 180-residue chain is Acireductone dioxygenase (180 aa).

Fe(2+) contacts are provided by His-97, His-99, Glu-103, and His-141. Ni(2+)-binding residues include His-97, His-99, Glu-103, and His-141.

This sequence belongs to the acireductone dioxygenase (ARD) family. As to quaternary structure, monomer. Requires Fe(2+) as cofactor. The cofactor is Ni(2+).

The enzyme catalyses 1,2-dihydroxy-5-(methylsulfanyl)pent-1-en-3-one + O2 = 3-(methylsulfanyl)propanoate + CO + formate + 2 H(+). It catalyses the reaction 1,2-dihydroxy-5-(methylsulfanyl)pent-1-en-3-one + O2 = 4-methylsulfanyl-2-oxobutanoate + formate + 2 H(+). It functions in the pathway amino-acid biosynthesis; L-methionine biosynthesis via salvage pathway; L-methionine from S-methyl-5-thio-alpha-D-ribose 1-phosphate: step 5/6. Functionally, catalyzes 2 different reactions between oxygen and the acireductone 1,2-dihydroxy-3-keto-5-methylthiopentene (DHK-MTPene) depending upon the metal bound in the active site. Fe-containing acireductone dioxygenase (Fe-ARD) produces formate and 2-keto-4-methylthiobutyrate (KMTB), the alpha-ketoacid precursor of methionine in the methionine recycle pathway. Ni-containing acireductone dioxygenase (Ni-ARD) produces methylthiopropionate, carbon monoxide and formate, and does not lie on the methionine recycle pathway. This chain is Acireductone dioxygenase, found in Yersinia pseudotuberculosis serotype O:3 (strain YPIII).